Reading from the N-terminus, the 291-residue chain is UTP--glucose-1-phosphate uridylyltransferase (291 aa).

Belongs to the UDPGP type 2 family.

It catalyses the reaction alpha-D-glucose 1-phosphate + UTP + H(+) = UDP-alpha-D-glucose + diphosphate. May play a role in stationary phase survival. This chain is UTP--glucose-1-phosphate uridylyltransferase (galU), found in Mycoplasma pneumoniae (strain ATCC 29342 / M129 / Subtype 1) (Mycoplasmoides pneumoniae).